A 392-amino-acid chain; its full sequence is Succinate--CoA ligase [ADP-forming] subunit beta (392 aa).

Residues 9-236 (KELFAAHGVP…PSAADPLEAK (228 aa)) enclose the ATP-grasp domain. ATP is bound by residues Lys45, 52-54 (GRG), Val94, and Glu99. Residues Asn191 and Asp205 each contribute to the Mg(2+) site. Substrate contacts are provided by residues Asn256 and 318 to 320 (GIT).

This sequence belongs to the succinate/malate CoA ligase beta subunit family. Heterotetramer of two alpha and two beta subunits. The cofactor is Mg(2+).

The enzyme catalyses succinate + ATP + CoA = succinyl-CoA + ADP + phosphate. It carries out the reaction GTP + succinate + CoA = succinyl-CoA + GDP + phosphate. It participates in carbohydrate metabolism; tricarboxylic acid cycle; succinate from succinyl-CoA (ligase route): step 1/1. Succinyl-CoA synthetase functions in the citric acid cycle (TCA), coupling the hydrolysis of succinyl-CoA to the synthesis of either ATP or GTP and thus represents the only step of substrate-level phosphorylation in the TCA. The beta subunit provides nucleotide specificity of the enzyme and binds the substrate succinate, while the binding sites for coenzyme A and phosphate are found in the alpha subunit. This is Succinate--CoA ligase [ADP-forming] subunit beta from Acidothermus cellulolyticus (strain ATCC 43068 / DSM 8971 / 11B).